We begin with the raw amino-acid sequence, 404 residues long: MKLPIYLDYAATCPVDERVVKKMMEFLSIDGNFGNPASRSHKFGWQAEEAVDVARNHIADLIGADSREIVFTSGATEADNLALKGVMRFYQTKGKHLITCKTEHKAILDTCRQLEREGFEVTYLDPKSDGLIDLEELKSVIRDDTVLVSIMHANNEIGVVQDIAKIGEICRERKVLFHTDATQSVGKLPINLSELKVDLLSMSSHKLYGPKGIGALYVCRKPRVRLEAIIHGGGHERGMRSGTLPVHQIVGMGEAYRIAKEEMATEMPRLTALRDRLYNGLKDIEETYVNGSMEQRLGNNLNISFNYVEGESLMMALRDIAVSSGSACTSASLEPSYVLRALGLNDELAHSSIRFTVGRYTTEEEIDYSIGLVKSAVKKLRDLSPLWDMFKEGIDLNSIEWTHH.

Pyridoxal 5'-phosphate contacts are provided by residues 75–76 (AT), N155, Q183, and 203–205 (SSH). Position 206 is an N6-(pyridoxal phosphate)lysine (K206). T243 contributes to the pyridoxal 5'-phosphate binding site. The active-site Cysteine persulfide intermediate is the C328. Residue C328 coordinates [2Fe-2S] cluster.

It belongs to the class-V pyridoxal-phosphate-dependent aminotransferase family. NifS/IscS subfamily. Homodimer. Forms a heterotetramer with IscU, interacts with other sulfur acceptors. Pyridoxal 5'-phosphate serves as cofactor.

It is found in the cytoplasm. The catalysed reaction is (sulfur carrier)-H + L-cysteine = (sulfur carrier)-SH + L-alanine. It functions in the pathway cofactor biosynthesis; iron-sulfur cluster biosynthesis. Functionally, master enzyme that delivers sulfur to a number of partners involved in Fe-S cluster assembly, tRNA modification or cofactor biosynthesis. Catalyzes the removal of elemental sulfur atoms from cysteine to produce alanine. Functions as a sulfur delivery protein for Fe-S cluster synthesis onto IscU, an Fe-S scaffold assembly protein, as well as other S acceptor proteins. The chain is Cysteine desulfurase IscS from Histophilus somni (strain 2336) (Haemophilus somnus).